The sequence spans 201 residues: 3-isopropylmalate dehydratase small subunit (201 aa).

The protein belongs to the LeuD family. LeuD type 1 subfamily. As to quaternary structure, heterodimer of LeuC and LeuD.

The enzyme catalyses (2R,3S)-3-isopropylmalate = (2S)-2-isopropylmalate. It functions in the pathway amino-acid biosynthesis; L-leucine biosynthesis; L-leucine from 3-methyl-2-oxobutanoate: step 2/4. Its function is as follows. Catalyzes the isomerization between 2-isopropylmalate and 3-isopropylmalate, via the formation of 2-isopropylmaleate. This chain is 3-isopropylmalate dehydratase small subunit, found in Rhodopseudomonas palustris (strain HaA2).